Reading from the N-terminus, the 128-residue chain is Sulfurtransferase TusD (128 aa).

Cys-78 (cysteine persulfide intermediate) is an active-site residue.

This sequence belongs to the DsrE/TusD family. Heterohexamer, formed by a dimer of trimers. The hexameric TusBCD complex contains 2 copies each of TusB, TusC and TusD. The TusBCD complex interacts with TusE.

It is found in the cytoplasm. In terms of biological role, part of a sulfur-relay system required for 2-thiolation of 5-methylaminomethyl-2-thiouridine (mnm(5)s(2)U) at tRNA wobble positions. Accepts sulfur from TusA and transfers it in turn to TusE. This is Sulfurtransferase TusD from Erwinia tasmaniensis (strain DSM 17950 / CFBP 7177 / CIP 109463 / NCPPB 4357 / Et1/99).